Consider the following 351-residue polypeptide: Protein Wnt-8a (351 aa).

The first 24 residues, 1-24 (MGNLFMLWAALGICCAAFSASAWS), serve as a signal peptide directing secretion. Cysteines 54 and 65 form a disulfide. N-linked (GlcNAc...) asparagine glycosylation is present at asparagine 103. 10 disulfides stabilise this stretch: cysteine 104-cysteine 112, cysteine 114-cysteine 132, cysteine 180-cysteine 194, cysteine 182-cysteine 189, cysteine 259-cysteine 297, cysteine 275-cysteine 290, cysteine 294-cysteine 336, cysteine 312-cysteine 327, cysteine 314-cysteine 324, and cysteine 319-cysteine 320. Residue serine 186 is the site of O-palmitoleoyl serine attachment. 2 N-linked (GlcNAc...) asparagine glycosylation sites follow: asparagine 262 and asparagine 281.

This sequence belongs to the Wnt family. As to quaternary structure, forms a soluble 1:1 complex with AFM; this prevents oligomerization and is required for prolonged biological activity. The complex with AFM may represent the physiological form in body fluids. Palmitoleoylation is required for efficient binding to frizzled receptors. Depalmitoleoylation leads to Wnt signaling pathway inhibition. In terms of processing, proteolytic processing by TIKI1 and TIKI2 promotes oxidation and formation of large disulfide-bond oligomers, leading to inactivation of WNT8A.

It is found in the secreted. Its subcellular location is the extracellular space. The protein localises to the extracellular matrix. Its function is as follows. Ligand for members of the frizzled family of seven transmembrane receptors. Plays a role in embryonic patterning. The chain is Protein Wnt-8a (WNT8A) from Homo sapiens (Human).